Reading from the N-terminus, the 511-residue chain is Bifunctional purine biosynthesis protein PurH (511 aa).

Residues 1 to 146 enclose the MGS-like domain; the sequence is MTKRALVSVS…KNHADVTVVV (146 aa).

It belongs to the PurH family.

It carries out the reaction (6R)-10-formyltetrahydrofolate + 5-amino-1-(5-phospho-beta-D-ribosyl)imidazole-4-carboxamide = 5-formamido-1-(5-phospho-D-ribosyl)imidazole-4-carboxamide + (6S)-5,6,7,8-tetrahydrofolate. It catalyses the reaction IMP + H2O = 5-formamido-1-(5-phospho-D-ribosyl)imidazole-4-carboxamide. Its pathway is purine metabolism; IMP biosynthesis via de novo pathway; 5-formamido-1-(5-phospho-D-ribosyl)imidazole-4-carboxamide from 5-amino-1-(5-phospho-D-ribosyl)imidazole-4-carboxamide (10-formyl THF route): step 1/1. It participates in purine metabolism; IMP biosynthesis via de novo pathway; IMP from 5-formamido-1-(5-phospho-D-ribosyl)imidazole-4-carboxamide: step 1/1. This Shouchella clausii (strain KSM-K16) (Alkalihalobacillus clausii) protein is Bifunctional purine biosynthesis protein PurH.